The primary structure comprises 123 residues: Ribonuclease P protein component (123 aa).

This sequence belongs to the RnpA family. In terms of assembly, consists of a catalytic RNA component (M1 or rnpB) and a protein subunit.

It catalyses the reaction Endonucleolytic cleavage of RNA, removing 5'-extranucleotides from tRNA precursor.. Functionally, RNaseP catalyzes the removal of the 5'-leader sequence from pre-tRNA to produce the mature 5'-terminus. It can also cleave other RNA substrates such as 4.5S RNA. The protein component plays an auxiliary but essential role in vivo by binding to the 5'-leader sequence and broadening the substrate specificity of the ribozyme. The polypeptide is Ribonuclease P protein component (Streptococcus pneumoniae serotype 4 (strain ATCC BAA-334 / TIGR4)).